The following is a 325-amino-acid chain: Forkhead box protein B1 (325 aa).

Positions Gln12–Leu103 form a DNA-binding region, fork-head. The segment covering Leu284–Ser309 has biased composition (low complexity). Positions Leu284–His325 are disordered.

Expressed widespread in the early developing ventricular zone of the neural tube and later restricted to areas of the spinal cord, hindbrain, thalamus and hypothalamus. Expressed in epithelial cells of developing and adult mammary glands.

The protein resides in the nucleus. Functionally, transcription factor expressed by neural progenitor cells in specific regions of the embryonic neuroepithelium. Essential for the mammillary nuclei maintenance. Negatively regulates the proliferation of oligodendrocyte progenitors and promotes oligodendrocyte maturation. Also expressed in mammary glands, plays a role in lactation, controls development of mammary glands and the inferior colliculi of the midbrain in the central nervous system that regulates the milk-ejection reflex. The chain is Forkhead box protein B1 (Foxb1) from Mus musculus (Mouse).